The chain runs to 202 residues: HTH-type transcriptional regulator BetI (202 aa).

The HTH tetR-type domain occupies 8–68; the sequence is PIRRRQLIDA…ATMRDITRQL (61 aa). A DNA-binding region (H-T-H motif) is located at residues 31–50; the sequence is TIAQIARRAGVSAGIISHYF.

It functions in the pathway amine and polyamine biosynthesis; betaine biosynthesis via choline pathway [regulation]. Its function is as follows. Repressor involved in the biosynthesis of the osmoprotectant glycine betaine. It represses transcription of the choline transporter BetT and the genes of BetAB involved in the synthesis of glycine betaine. In Cronobacter sakazakii (strain ATCC BAA-894) (Enterobacter sakazakii), this protein is HTH-type transcriptional regulator BetI.